Consider the following 225-residue polypeptide: Small ribosomal subunit protein uS3 (225 aa).

One can recognise a KH type-2 domain in the interval 38-106 (LRAHLRRKLS…DVALNIVEIR (69 aa)).

The protein belongs to the universal ribosomal protein uS3 family. In terms of assembly, part of the 30S ribosomal subunit. Forms a tight complex with proteins S10 and S14.

Its function is as follows. Binds the lower part of the 30S subunit head. Binds mRNA in the 70S ribosome, positioning it for translation. The sequence is that of Small ribosomal subunit protein uS3 from Gluconacetobacter diazotrophicus (strain ATCC 49037 / DSM 5601 / CCUG 37298 / CIP 103539 / LMG 7603 / PAl5).